Consider the following 519-residue polypeptide: MIILYIILAIIAIVVGYCAGFFMHKRLIEKQTANASNSADVIVENARKQAETERREKLLEAKDESHRYRAKVEKELKERRAELQKQEDRLLQREDSLDRKDNSFEKRENSLERKEQKLALDQKHIDEQQQKASSLVEERQQELERVSNLTQEDAKNLIISETEAKLEKERALIIKEGLEDAEAEADQTARKLIAEAIQRSAADMASETTITVVSLPNDDMKGRIIGREGRNIRNFQNVTGVDLIIDDTPEAVVLSSFDPIRREIARIALDKLIQDGRIHPARIEEMVEKAKKEMDDNIRKTGEQAVFDLGIHSMNPELIKLIGQLKYRTSYGQNVLNHSIEVANLAGVLAAELGEDVTVAKRAGLLHDIGKAVQHETDTSHAQLGVELAKKYKESATVINAIAAHHDGVEAQHVISVLVAAANSISAARPGARSDTLQSYIHRLEKLEQISNNFDGVKKSYAIQAGREVRVIVKPNKINDLKAVMLTHNIRKAIEKELEYAGKVKVTVVREVRAVDYAK.

The helical transmembrane segment at 2-22 (IILYIILAIIAIVVGYCAGFF) threads the bilayer. The segment at 84-113 (QKQEDRLLQREDSLDRKDNSFEKRENSLER) is disordered. Residues 209-294 (TITVVSLPND…EMVEKAKKEM (86 aa)) form the KH domain. Positions 335–428 (VLNHSIEVAN…VAAANSISAA (94 aa)) constitute an HD domain.

The protein belongs to the RNase Y family.

Its subcellular location is the cell membrane. Functionally, endoribonuclease that initiates mRNA decay. The polypeptide is Ribonuclease Y 1 (Pediococcus pentosaceus (strain ATCC 25745 / CCUG 21536 / LMG 10740 / 183-1w)).